The chain runs to 532 residues: 2-isopropylmalate synthase (532 aa).

The Pyruvate carboxyltransferase domain occupies 5-267 (VIIFDTTLRD…HTNINHQEIY (263 aa)). Residues Asp14, His202, His204, and Asn238 each coordinate Mn(2+). Positions 392–532 (HLDYFSVQSG…SKQQNSQETV (141 aa)) are regulatory domain. The tract at residues 513–532 (QQHNNQQQNDSKQQNSQETV) is disordered.

It belongs to the alpha-IPM synthase/homocitrate synthase family. LeuA type 1 subfamily. As to quaternary structure, homodimer. It depends on Mn(2+) as a cofactor.

It localises to the cytoplasm. The catalysed reaction is 3-methyl-2-oxobutanoate + acetyl-CoA + H2O = (2S)-2-isopropylmalate + CoA + H(+). The protein operates within amino-acid biosynthesis; L-leucine biosynthesis; L-leucine from 3-methyl-2-oxobutanoate: step 1/4. Catalyzes the condensation of the acetyl group of acetyl-CoA with 3-methyl-2-oxobutanoate (2-ketoisovalerate) to form 3-carboxy-3-hydroxy-4-methylpentanoate (2-isopropylmalate). The polypeptide is 2-isopropylmalate synthase (Pectobacterium atrosepticum (strain SCRI 1043 / ATCC BAA-672) (Erwinia carotovora subsp. atroseptica)).